The following is a 233-amino-acid chain: uncharacterized protein (233 aa).

Disordered regions lie at residues 1 to 159 and 181 to 206; these read MGKH…NEKL and MGVK…QDKM. Residues 36 to 115 show a composition bias toward basic and acidic residues; sequence RDRSRSPHKE…RRDDKNRLSA (80 aa). Positions 135-148 are enriched in low complexity; it reads SSSSNTTDTASSSS. Residues 189–206 are compositionally biased toward basic and acidic residues; the sequence is PTDDSSRLSDEKNRQDKM.

This is an uncharacterized protein from Caenorhabditis elegans.